The following is a 428-amino-acid chain: Glutamate-1-semialdehyde 2,1-aminomutase (428 aa).

An N6-(pyridoxal phosphate)lysine modification is found at Lys-267.

This sequence belongs to the class-III pyridoxal-phosphate-dependent aminotransferase family. HemL subfamily. In terms of assembly, homodimer. Pyridoxal 5'-phosphate is required as a cofactor.

It localises to the cytoplasm. The catalysed reaction is (S)-4-amino-5-oxopentanoate = 5-aminolevulinate. The protein operates within porphyrin-containing compound metabolism; protoporphyrin-IX biosynthesis; 5-aminolevulinate from L-glutamyl-tRNA(Glu): step 2/2. This chain is Glutamate-1-semialdehyde 2,1-aminomutase, found in Desulforapulum autotrophicum (strain ATCC 43914 / DSM 3382 / VKM B-1955 / HRM2) (Desulfobacterium autotrophicum).